We begin with the raw amino-acid sequence, 147 residues long: Large ribosomal subunit protein uL13 (147 aa).

This sequence belongs to the universal ribosomal protein uL13 family. Part of the 50S ribosomal subunit.

Its function is as follows. This protein is one of the early assembly proteins of the 50S ribosomal subunit, although it is not seen to bind rRNA by itself. It is important during the early stages of 50S assembly. This is Large ribosomal subunit protein uL13 from Pseudothermotoga lettingae (strain ATCC BAA-301 / DSM 14385 / NBRC 107922 / TMO) (Thermotoga lettingae).